Reading from the N-terminus, the 447-residue chain is Cysteine--tRNA ligase (447 aa).

C28 provides a ligand contact to Zn(2+). Positions 30–40 (PTVYNYIHIGN) match the 'HIGH' region motif. Zn(2+) is bound by residues C211, H236, and E240. The short motif at 268 to 272 (KMSKS) is the 'KMSKS' region element. Residue K271 coordinates ATP.

Belongs to the class-I aminoacyl-tRNA synthetase family. Monomer. Zn(2+) serves as cofactor.

The protein resides in the cytoplasm. It catalyses the reaction tRNA(Cys) + L-cysteine + ATP = L-cysteinyl-tRNA(Cys) + AMP + diphosphate. In Streptococcus pyogenes serotype M3 (strain ATCC BAA-595 / MGAS315), this protein is Cysteine--tRNA ligase.